We begin with the raw amino-acid sequence, 520 residues long: Dihydropyrimidinase 2 (520 aa).

Positions 59, 61, and 152 each coordinate Zn(2+). The residue at position 152 (K152) is an N6-carboxylysine. Y157 is a binding site for substrate. Zn(2+)-binding residues include H185 and H241. S291 is a binding site for substrate. Residue D319 coordinates Zn(2+). N340 is a binding site for substrate.

This sequence belongs to the metallo-dependent hydrolases superfamily. Hydantoinase/dihydropyrimidinase family. In terms of assembly, homotetramer. Zn(2+) serves as cofactor. In terms of processing, carboxylation allows a single lysine to coordinate two zinc ions. In terms of tissue distribution, body wall muscles.

It catalyses the reaction 5,6-dihydrouracil + H2O = 3-(carbamoylamino)propanoate + H(+). The protein is Dihydropyrimidinase 2 (dhp-2) of Caenorhabditis elegans.